Here is a 572-residue protein sequence, read N- to C-terminus: Phosphoenolpyruvate-protein phosphotransferase (572 aa).

H191 acts as the Tele-phosphohistidine intermediate in catalysis. 2 residues coordinate phosphoenolpyruvate: R298 and R334. Residues E433 and D457 each contribute to the Mg(2+) site. Phosphoenolpyruvate-binding positions include 456-457 and R467; that span reads ND. C504 (proton donor) is an active-site residue.

It belongs to the PEP-utilizing enzyme family. As to quaternary structure, homodimer. Requires Mg(2+) as cofactor.

It localises to the cytoplasm. The catalysed reaction is L-histidyl-[protein] + phosphoenolpyruvate = N(pros)-phospho-L-histidyl-[protein] + pyruvate. General (non sugar-specific) component of the phosphoenolpyruvate-dependent sugar phosphotransferase system (sugar PTS). This major carbohydrate active-transport system catalyzes the phosphorylation of incoming sugar substrates concomitantly with their translocation across the cell membrane. Enzyme I transfers the phosphoryl group from phosphoenolpyruvate (PEP) to the phosphoryl carrier protein (HPr). The protein is Phosphoenolpyruvate-protein phosphotransferase of Staphylococcus aureus (strain MSSA476).